Consider the following 136-residue polypeptide: Small ribosomal subunit protein uS9 (136 aa).

Residues 111 to 136 are disordered; the sequence is TRDPRMKERKKTGQPGARKRFQFSKR. The span at 117–136 shows a compositional bias: basic residues; it reads KERKKTGQPGARKRFQFSKR.

Belongs to the universal ribosomal protein uS9 family.

The chain is Small ribosomal subunit protein uS9 from Methylacidiphilum infernorum (isolate V4) (Methylokorus infernorum (strain V4)).